The chain runs to 876 residues: DNA topoisomerase 1 (876 aa).

The Toprim domain occupies 3–150 (KSLVIVESPA…RYKRVVFNEI (148 aa)). Glu9 is a Mg(2+) binding site. Positions 37–69 (LPTAGQTATPTGKAAAASTKKASTTDKEQQKRE) are disordered. Low complexity predominate over residues 38–58 (PTAGQTATPTGKAAAASTKKA). A compositionally biased stretch (basic and acidic residues) spans 59-69 (STTDKEQQKRE). Mg(2+) is bound at residue Asp119. One can recognise a Topo IA-type catalytic domain in the interval 166–582 (NMDGVNAQQA…EFFADFSRDL (417 aa)). Residues 200-205 (SAGRVQ) are interaction with DNA. Tyr327 acts as the O-(5'-phospho-DNA)-tyrosine intermediate in catalysis. 2 consecutive C4-type zinc fingers follow at residues 668-695 (CPIC…NPNC) and 717-742 (CDKC…NDAC).

This sequence belongs to the type IA topoisomerase family. As to quaternary structure, monomer. Mg(2+) is required as a cofactor.

The enzyme catalyses ATP-independent breakage of single-stranded DNA, followed by passage and rejoining.. Functionally, releases the supercoiling and torsional tension of DNA, which is introduced during the DNA replication and transcription, by transiently cleaving and rejoining one strand of the DNA duplex. Introduces a single-strand break via transesterification at a target site in duplex DNA. The scissile phosphodiester is attacked by the catalytic tyrosine of the enzyme, resulting in the formation of a DNA-(5'-phosphotyrosyl)-enzyme intermediate and the expulsion of a 3'-OH DNA strand. The free DNA strand then undergoes passage around the unbroken strand, thus removing DNA supercoils. Finally, in the religation step, the DNA 3'-OH attacks the covalent intermediate to expel the active-site tyrosine and restore the DNA phosphodiester backbone. The protein is DNA topoisomerase 1 of Vibrio cholerae serotype O1 (strain ATCC 39315 / El Tor Inaba N16961).